A 502-amino-acid chain; its full sequence is UDP-N-acetylmuramoylalanine--D-glutamate ligase (502 aa).

129-135 (GTNGKTT) contacts ATP. The segment at 288–307 (APDETTSRRRKRDGAHTPDI) is disordered.

This sequence belongs to the MurCDEF family.

Its subcellular location is the cytoplasm. The catalysed reaction is UDP-N-acetyl-alpha-D-muramoyl-L-alanine + D-glutamate + ATP = UDP-N-acetyl-alpha-D-muramoyl-L-alanyl-D-glutamate + ADP + phosphate + H(+). It participates in cell wall biogenesis; peptidoglycan biosynthesis. Cell wall formation. Catalyzes the addition of glutamate to the nucleotide precursor UDP-N-acetylmuramoyl-L-alanine (UMA). This chain is UDP-N-acetylmuramoylalanine--D-glutamate ligase, found in Burkholderia ambifaria (strain ATCC BAA-244 / DSM 16087 / CCUG 44356 / LMG 19182 / AMMD) (Burkholderia cepacia (strain AMMD)).